Reading from the N-terminus, the 161-residue chain is Nucleotide-binding protein azo2183 (161 aa).

This sequence belongs to the YajQ family.

Its function is as follows. Nucleotide-binding protein. This Azoarcus sp. (strain BH72) protein is Nucleotide-binding protein azo2183.